The sequence spans 138 residues: Large ribosomal subunit protein mL43 (138 aa).

Belongs to the mitochondrion-specific ribosomal protein mL43 family. In terms of assembly, component of the mitochondrial large ribosomal subunit (mt-LSU). Mature N.crassa 74S mitochondrial ribosomes consist of a small (37S) and a large (54S) subunit. The 37S small subunit contains a 16S ribosomal RNA (16S mt-rRNA) and 32 different proteins. The 54S large subunit contains a 23S rRNA (23S mt-rRNA) and 42 different proteins.

The protein resides in the mitochondrion. Functionally, component of the mitochondrial ribosome (mitoribosome), a dedicated translation machinery responsible for the synthesis of mitochondrial genome-encoded proteins, including at least some of the essential transmembrane subunits of the mitochondrial respiratory chain. The mitoribosomes are attached to the mitochondrial inner membrane and translation products are cotranslationally integrated into the membrane. The sequence is that of Large ribosomal subunit protein mL43 (mrpl51) from Neurospora crassa (strain ATCC 24698 / 74-OR23-1A / CBS 708.71 / DSM 1257 / FGSC 987).